We begin with the raw amino-acid sequence, 238 residues long: Accessory gene regulator A (238 aa).

A Response regulatory domain is found at 2–125 (KIFICEDDPK…LRTRIIDCLE (124 aa)). D59 is subject to 4-aspartylphosphate. One can recognise an HTH LytTR-type domain in the interval 143 to 238 (IELKRGSNSV…YASVRNVKKK (96 aa)).

The protein localises to the cytoplasm. Required for high-level post-exponential phase expression of a series of secreted proteins. In Staphylococcus aureus (strain Mu50 / ATCC 700699), this protein is Accessory gene regulator A (agrA).